The primary structure comprises 325 residues: Beta-ketoacyl-[acyl-carrier-protein] synthase III (325 aa).

Active-site residues include Cys112 and His250. Positions 251 to 255 (QANSR) are ACP-binding. Asn280 is an active-site residue.

It belongs to the thiolase-like superfamily. FabH family. As to quaternary structure, homodimer.

It localises to the cytoplasm. It carries out the reaction malonyl-[ACP] + acetyl-CoA + H(+) = 3-oxobutanoyl-[ACP] + CO2 + CoA. It functions in the pathway lipid metabolism; fatty acid biosynthesis. Catalyzes the condensation reaction of fatty acid synthesis by the addition to an acyl acceptor of two carbons from malonyl-ACP. Catalyzes the first condensation reaction which initiates fatty acid synthesis and may therefore play a role in governing the total rate of fatty acid production. Possesses both acetoacetyl-ACP synthase and acetyl transacylase activities. Its substrate specificity determines the biosynthesis of branched-chain and/or straight-chain of fatty acids. The protein is Beta-ketoacyl-[acyl-carrier-protein] synthase III of Lactococcus lactis subsp. lactis (strain IL1403) (Streptococcus lactis).